A 781-amino-acid chain; its full sequence is MARASTTPTTRTDPAALPSRIGRLLGEVRWFLLLAVTIAFLTILLSYNKADPGWSHASQVDDVRNLGGRVGAWFADVLLFVFGASAYWWALLLLRRVWRGWRELMSDERVPRAATPRVDAGVTWFGFALILSASMGLEAIRMHTLHMKLPRAPGGVLGDLIGGSLQHALGFTGGTLLLLLMFTVGLSLFFHFSWLNLAEQIGAGVETLFVGFKTRRENKQDRAIGEAAKVEREEVVETRRVRIEEAPPVQIVRPAAVVKSERVEREKQQPLFVDIQDSDLPALALLDAVPPAQETVSAETLEFTSRLIEKKLKDFGVEVTVVAAYPGPVITRYEIEPATGVKGSQIVNLAKDLARSLSLVSVRVVETIPGKNCMGLELPNPKRQAVRLAEILGSQVYNESASQLTMALGKDIAGKPVVADLAKMPHCMVAGTTGSGKSVGINAMILSLLYKARADAVRLILIDPKMLELSIYEGIPHLLCPVVTDMRQAGHALNWAVGEMERRYKLMSKMGVRNLAGFNKKIEEAAAREEKIHNPFSLTPDAPEPLDKLPMIVIVIDELADLMMVVGKKVEELIARIAQKARAAGIHLVLATQRPSVDVITGLIKANVPTRIAFQVSSKIDSRTILDQQGAEALLGMGDMLYLAPGTGLPVRVHGAFVSDDEVHRVVENLKSQGEPNYIEGLLEGGTADGEGGGDGFGGGAGLAGGGAGEADPLYDQAVDVVLKNRRASISLVQRHLRIGYNRAARLLEDMEKAGLVSAMSGNGNREILAPNRNGNVVEEE.

The next 4 membrane-spanning stretches (helical) occupy residues 24–44, 74–94, 120–140, and 170–190; these read LLGE…LTIL, FADV…LLLL, AGVT…LEAI, and GFTG…SLFF. Over 191 to 781 the chain is Cytoplasmic; sequence HFSWLNLAEQ…NRNGNVVEEE (591 aa). The region spanning 414–623 is the FtsK domain; that stretch reads GKPVVADLAK…FQVSSKIDSR (210 aa). 434–439 is a binding site for ATP; it reads GSGKSV.

It belongs to the FtsK/SpoIIIE/SftA family. In terms of assembly, homohexamer. Forms a ring that surrounds DNA.

The protein resides in the cell inner membrane. Functionally, essential cell division protein that coordinates cell division and chromosome segregation. The N-terminus is involved in assembly of the cell-division machinery. The C-terminus functions as a DNA motor that moves dsDNA in an ATP-dependent manner towards the dif recombination site, which is located within the replication terminus region. Translocation stops specifically at Xer-dif sites, where FtsK interacts with the Xer recombinase, allowing activation of chromosome unlinking by recombination. FtsK orienting polar sequences (KOPS) guide the direction of DNA translocation. FtsK can remove proteins from DNA as it translocates, but translocation stops specifically at XerCD-dif site, thereby preventing removal of XerC and XerD from dif. This is DNA translocase FtsK 2 (ftsK2) from Ralstonia nicotianae (strain ATCC BAA-1114 / GMI1000) (Ralstonia solanacearum).